The chain runs to 418 residues: Putative methylthiotransferase HP_0285 (418 aa).

An MTTase N-terminal domain is found at 2–110 (KKVYFKTFGC…INALLQEKKR (109 aa)). Residues cysteine 11, cysteine 45, cysteine 74, cysteine 144, cysteine 148, and cysteine 151 each coordinate [4Fe-4S] cluster. The Radical SAM core domain occupies 130–355 (FVGKTRAFIK…KDLIFHKNKA (226 aa)).

This sequence belongs to the methylthiotransferase family. [4Fe-4S] cluster serves as cofactor.

This chain is Putative methylthiotransferase HP_0285, found in Helicobacter pylori (strain ATCC 700392 / 26695) (Campylobacter pylori).